The primary structure comprises 85 residues: MSERGFNRTIKGVVVSNKMDKTIVIRAERLVKHPVFHKYTRKHVKYMVHDEKNECKVGDTVIVMESRPLSRLKRWRMLRIVAKAE.

This sequence belongs to the universal ribosomal protein uS17 family. In terms of assembly, part of the 30S ribosomal subunit.

One of the primary rRNA binding proteins, it binds specifically to the 5'-end of 16S ribosomal RNA. This Syntrophus aciditrophicus (strain SB) protein is Small ribosomal subunit protein uS17.